We begin with the raw amino-acid sequence, 131 residues long: Small ribosomal subunit protein uS11 (131 aa).

It belongs to the universal ribosomal protein uS11 family. Part of the 30S ribosomal subunit. Interacts with proteins S7 and S18. Binds to IF-3.

In terms of biological role, located on the platform of the 30S subunit, it bridges several disparate RNA helices of the 16S rRNA. Forms part of the Shine-Dalgarno cleft in the 70S ribosome. In Endomicrobium trichonymphae, this protein is Small ribosomal subunit protein uS11.